The following is a 273-amino-acid chain: Ribosomal RNA small subunit methyltransferase A (273 aa).

S-adenosyl-L-methionine contacts are provided by Asn18, Leu20, Gly45, Glu66, Asp91, and Asn113.

The protein belongs to the class I-like SAM-binding methyltransferase superfamily. rRNA adenine N(6)-methyltransferase family. RsmA subfamily.

Its subcellular location is the cytoplasm. The catalysed reaction is adenosine(1518)/adenosine(1519) in 16S rRNA + 4 S-adenosyl-L-methionine = N(6)-dimethyladenosine(1518)/N(6)-dimethyladenosine(1519) in 16S rRNA + 4 S-adenosyl-L-homocysteine + 4 H(+). Its function is as follows. Specifically dimethylates two adjacent adenosines (A1518 and A1519) in the loop of a conserved hairpin near the 3'-end of 16S rRNA in the 30S particle. May play a critical role in biogenesis of 30S subunits. The protein is Ribosomal RNA small subunit methyltransferase A of Klebsiella pneumoniae subsp. pneumoniae (strain ATCC 700721 / MGH 78578).